The sequence spans 105 residues: U2-lycotoxin-Ls1b (105 aa).

Positions 1-17 (MIKYVLISALLVVAVYS) are cleaved as a signal peptide. A propeptide spanning residues 18–41 (FTIEDNEDALLEEAEDELDTEEER) is cleaved from the precursor. 4 disulfides stabilise this stretch: Cys51/Cys67, Cys58/Cys97, Cys60/Cys83, and Cys69/Cys81.

This sequence belongs to the neurotoxin 04 (omega-agtx) family. 01 (type I omega-agtx) subfamily. As to expression, expressed by the venom gland.

The protein localises to the secreted. Its function is as follows. Insecticidal to house crickets. It induces an excitatory slow-onset impact that leads to irreversible spastic paralysis. It also modifies human voltage-gated potassium channel Kv1.5/KCNA5. Most likely, it binds to the voltage-sensing domain of the channel, suggesting it does not block the pore but prevents its opening at physiological membrane potentials. The recombinant peptide binds to the channel in an irreversible manner and slows down the hKv1.5 current activation kinetics. It is not toxic to mice, when intracranially injected (at 0.5 ug/g mouse). This chain is U2-lycotoxin-Ls1b, found in Lycosa singoriensis (Wolf spider).